An 80-amino-acid chain; its full sequence is Large ribosomal subunit protein uL24 (80 aa).

The interval 53 to 80 is disordered; the sequence is HMRPTQGQTQGSIIEREFPIHSSNVKKS.

It belongs to the universal ribosomal protein uL24 family. As to quaternary structure, part of the 50S ribosomal subunit.

In terms of biological role, one of two assembly initiator proteins, it binds directly to the 5'-end of the 23S rRNA, where it nucleates assembly of the 50S subunit. Its function is as follows. One of the proteins that surrounds the polypeptide exit tunnel on the outside of the subunit. The protein is Large ribosomal subunit protein uL24 of Pelodictyon phaeoclathratiforme (strain DSM 5477 / BU-1).